The sequence spans 220 residues: Metalloproteinase inhibitor 2 (220 aa).

Positions 1 to 26 (MGAAARSLPLAFCLLLLGTLLPRADA) are cleaved as a signal peptide. Cys-27 lines the Zn(2+) pocket. The interval 27–30 (CSCS) is involved in metalloproteinase-binding. 6 disulfides stabilise this stretch: Cys-27–Cys-98, Cys-29–Cys-127, Cys-39–Cys-152, Cys-154–Cys-201, Cys-159–Cys-164, and Cys-172–Cys-193. Residues 27–152 (CSCSPVHPQQ…SLNHRYQMGC (126 aa)) form the NTR domain.

It belongs to the protease inhibitor I35 (TIMP) family. In terms of assembly, interacts (via the C-terminal) with MMP2 (via the C-terminal PEX domain); the interaction inhibits the MMP2 activity. In terms of processing, the activity of TIMP2 is dependent on the presence of disulfide bonds.

Its subcellular location is the secreted. Functionally, complexes with metalloproteinases (such as collagenases) and irreversibly inactivates them by binding to their catalytic zinc cofactor. The protein is Metalloproteinase inhibitor 2 (TIMP2) of Bos taurus (Bovine).